The chain runs to 29 residues: Cytochrome b6-f complex subunit 8 (29 aa).

A helical transmembrane segment spans residues 3–23 (IVSIAWAALMVVFSFSLSLVV).

It belongs to the PetN family. As to quaternary structure, the 4 large subunits of the cytochrome b6-f complex are cytochrome b6, subunit IV (17 kDa polypeptide, PetD), cytochrome f and the Rieske protein, while the 4 small subunits are PetG, PetL, PetM and PetN. The complex functions as a dimer.

The protein localises to the plastid. The protein resides in the chloroplast thylakoid membrane. Component of the cytochrome b6-f complex, which mediates electron transfer between photosystem II (PSII) and photosystem I (PSI), cyclic electron flow around PSI, and state transitions. The protein is Cytochrome b6-f complex subunit 8 of Phaseolus vulgaris (Kidney bean).